A 569-amino-acid chain; its full sequence is Rab GTPase-binding effector protein 2 (569 aa).

3 disordered regions span residues Met1–Ser41, Ile180–Ser265, and Arg388–Pro411. Ala2 is subject to N-acetylalanine. Positions Glu34–Ala187 form a coiled coil. Ser189 and Ser193 each carry phosphoserine. At Ser200 the chain carries Phosphoserine; by GSK3-alpha. The residue at position 204 (Ser204) is a Phosphoserine. Low complexity-rich tracts occupy residues Ser245–Ser257 and Pro393–Glu403. A coiled-coil region spans residues Asp289–Gln523.

This sequence belongs to the rabaptin family. In terms of assembly, heterodimer with RABGEF1. The dimer binds RAB5A that has been activated by GTP-binding. Interacts with SDCCAG8; this interaction is important for ciliogenesis regulation. Interacts with RAB4A; this interaction may mediate VEGFR2 cell surface expression.

The protein resides in the cytoplasm. It localises to the early endosome. It is found in the cytoskeleton. Its subcellular location is the microtubule organizing center. The protein localises to the centrosome. The protein resides in the cilium basal body. Its function is as follows. Plays a role in membrane trafficking and in homotypic early endosome fusion. Participates in arteriogenesis by regulating vascular endothelial growth factor receptor 2/VEGFR2 cell surface expression and endosomal trafficking. By interacting with SDCCAG8, localizes to centrosomes and plays a critical role in ciliogenesis. This is Rab GTPase-binding effector protein 2 (RABEP2) from Homo sapiens (Human).